Here is a 279-residue protein sequence, read N- to C-terminus: 2-dehydro-3-deoxyphosphooctonate aldolase (279 aa).

Belongs to the KdsA family.

It localises to the cytoplasm. The catalysed reaction is D-arabinose 5-phosphate + phosphoenolpyruvate + H2O = 3-deoxy-alpha-D-manno-2-octulosonate-8-phosphate + phosphate. Its pathway is carbohydrate biosynthesis; 3-deoxy-D-manno-octulosonate biosynthesis; 3-deoxy-D-manno-octulosonate from D-ribulose 5-phosphate: step 2/3. The protein operates within bacterial outer membrane biogenesis; lipopolysaccharide biosynthesis. The polypeptide is 2-dehydro-3-deoxyphosphooctonate aldolase (Desulfosudis oleivorans (strain DSM 6200 / JCM 39069 / Hxd3) (Desulfococcus oleovorans)).